The sequence spans 241 residues: Probable transcriptional regulatory protein Reut_A2522 (241 aa).

This sequence belongs to the TACO1 family.

Its subcellular location is the cytoplasm. This chain is Probable transcriptional regulatory protein Reut_A2522, found in Cupriavidus pinatubonensis (strain JMP 134 / LMG 1197) (Cupriavidus necator (strain JMP 134)).